Reading from the N-terminus, the 306-residue chain is ATP synthase F(1) complex subunit gamma, mitochondrial (306 aa).

Residues Met-1 to Gln-17 constitute a mitochondrion transit peptide.

The protein belongs to the ATPase gamma chain family. Component of the ATP synthase complex composed at least of ATP5F1A/subunit alpha, ATP5F1B/subunit beta, ATP5MC1/subunit c (homooctomer), MT-ATP6/subunit a, MT-ATP8/subunit 8, ATP5ME/subunit e, ATP5MF/subunit f, ATP5MG/subunit g, ATP5MK/subunit k, ATP5MJ/subunit j, ATP5F1C/subunit gamma, ATP5F1D/subunit delta, ATP5F1E/subunit epsilon, ATP5PF/subunit F6, ATP5PB/subunit b, ATP5PD/subunit d, ATP5PO/subunit OSCP. ATP synthase complex consists of a soluble F(1) head domain (subunits alpha(3) and beta(3)) - the catalytic core - and a membrane F(0) domain - the membrane proton channel (subunits c, a, 8, e, f, g, k and j). These two domains are linked by a central stalk (subunits gamma, delta, and epsilon) rotating inside the F1 region and a stationary peripheral stalk (subunits F6, b, d, and OSCP).

The protein localises to the mitochondrion inner membrane. In terms of biological role, subunit gamma, of the mitochondrial membrane ATP synthase complex (F(1)F(0) ATP synthase or Complex V) that produces ATP from ADP in the presence of a proton gradient across the membrane which is generated by electron transport complexes of the respiratory chain. ATP synthase complex consist of a soluble F(1) head domain - the catalytic core - and a membrane F(1) domain - the membrane proton channel. These two domains are linked by a central stalk rotating inside the F(1) region and a stationary peripheral stalk. During catalysis, ATP synthesis in the catalytic domain of F(1) is coupled via a rotary mechanism of the central stalk subunits to proton translocation. In vivo, can only synthesize ATP although its ATP hydrolase activity can be activated artificially in vitro. With the central stalk subunit delta, is essential for the biogenesis of F(1) catalytic part of the ATP synthase complex namely in the formation of F1 assembly intermediate. The polypeptide is ATP synthase F(1) complex subunit gamma, mitochondrial (Dictyostelium discoideum (Social amoeba)).